Reading from the N-terminus, the 297-residue chain is Homoserine kinase (297 aa).

82–92 (PLTRGLGSSAS) provides a ligand contact to ATP.

The protein belongs to the GHMP kinase family. Homoserine kinase subfamily.

It localises to the cytoplasm. It catalyses the reaction L-homoserine + ATP = O-phospho-L-homoserine + ADP + H(+). Its pathway is amino-acid biosynthesis; L-threonine biosynthesis; L-threonine from L-aspartate: step 4/5. Catalyzes the ATP-dependent phosphorylation of L-homoserine to L-homoserine phosphate. This Bacillus mycoides (strain KBAB4) (Bacillus weihenstephanensis) protein is Homoserine kinase.